The sequence spans 304 residues: Protein PagO (304 aa).

A run of 10 helical transmembrane segments spans residues 4 to 24 (VSISILFMLVSLTWGTTWLAM), 34 to 54 (VFATGMRFMFAAPFLIIIAWL), 67 to 87 (LFQFVICIFYFCIPFSLMIYG), 95 to 115 (LAAIIFANMPVAVLIASVLFL), 119 to 139 (AKLMQIAGLTIAITALTGILL), 150 to 170 (WQGITALISAVLIHAIIYTQC), 180 to 200 (ITFNALPCLLAGLILSATGWF), 214 to 234 (ILATLYLGAFAGVFGILCYFA), 246 to 266 (LVFLIFPLIAVSLEDYIYGYA), and 267 to 287 (ISTHSMLLIIPLVIGIFLTLV). EamA domains are found at residues 15–139 (LTWG…GILL) and 161–287 (LIHA…LTLV).

This sequence belongs to the EamA transporter family.

It localises to the cell membrane. The chain is Protein PagO (pagO) from Salmonella typhimurium (strain LT2 / SGSC1412 / ATCC 700720).